A 442-amino-acid chain; its full sequence is MSTTPMAAPPGADLKPVTSSRGRSSTSDEQKLRSSCESCAQSKLKCSGDKPACARCAKRGLACKYVIAKRGGRKPKGYTSTNDNNPSKRREDSHSPAASQWSSTGHLEQSYPYCDPTISGSASPALIAMSDFYNPMDQNLPDAPTSHSDISMDFDFNDCFSLGFPSSNELSDFCNVGSTDMFSPSLDSSSSSSTGPERQLLCDGFSLTDDAMSDLFPLSPPEPQQQISCTPTDKNPHSYQEACLNGSCSCLVEALSLMKQLVSSPARNGAASPPNIQTIIDRNEATIESVRRMLECSCSQDDGYLLSVMSLIIFRVLGWYATVARQTACDVDSQPSRSPQSSISSAGSGYCLEGADSARMAAQLVLSEIHHVRRIVHQLSLKLKAQGEKERSRPETRMEGLEAMDNEMTLPLSATMYDQLDVDLKKRLRALSWEMIDRLRRY.

Residues 1–34 form a disordered region; sequence MSTTPMAAPPGADLKPVTSSRGRSSTSDEQKLRS. The zn(2)-C6 fungal-type DNA-binding region spans 36 to 63; sequence CESCAQSKLKCSGDKPACARCAKRGLAC. A disordered region spans residues 74 to 107; sequence KPKGYTSTNDNNPSKRREDSHSPAASQWSSTGHL. The span at 96-107 shows a compositional bias: polar residues; the sequence is PAASQWSSTGHL.

The protein resides in the nucleus. In terms of biological role, transcription factor that positively regulates the expression of the gene cluster that mediates the biosynthesis of an emodin derivative that may be involved in black Sigatoka disease of banana. The polypeptide is Transcription factor MYCFIDRAFT_198930 (Pseudocercospora fijiensis (strain CIRAD86) (Black leaf streak disease fungus)).